We begin with the raw amino-acid sequence, 246 residues long: Myelin protein P0 (246 aa).

The first 27 residues, 1–27, serve as a signal peptide directing secretion; that stretch reads MFRDLKPAYLFCCSVLYAFSVLRPSQG. In terms of domain architecture, Ig-like V-type spans 28 to 143; it reads ISVSTHHNLH…VGTSSDVHLT (116 aa). At 28–150 the chain is on the extracellular side; the sequence is ISVSTHHNLH…HLTVYDKIPP (123 aa). The cysteines at positions 48 and 125 are disulfide-linked. An N-linked (GlcNAc...) (complex) asparagine glycan is attached at asparagine 120. Residues 151-178 traverse the membrane as a helical segment; sequence VGAGVVSGAIIGTFLGIILLIVGGLYLF. The Cytoplasmic segment spans residues 179–246; sequence RYIVRRRARS…KLSESKRDKK (68 aa). The disordered stretch occupies residues 200–246; the sequence is AERGKVSGKAGTVSKGPVLYATLDQSKSGKGASEKKSKLSESKRDKK. Over residues 231-246 the composition is skewed to basic and acidic residues; sequence ASEKKSKLSESKRDKK.

Belongs to the myelin P0 protein family. In terms of processing, N-glycan is sulfated. In terms of tissue distribution, found only in peripheral nervous system Schwann cells.

It is found in the cell membrane. Creation of an extracellular membrane face which guides the wrapping process and ultimately compacts adjacent lamellae. This Heterodontus francisci (Horn shark) protein is Myelin protein P0 (mpz).